The chain runs to 1308 residues: Spermatogenesis-associated protein 31F1B (1308 aa).

A helical transmembrane segment spans residues 7 to 27; sequence FLWDTECPLYVYFCFFIIVLI. Disordered regions lie at residues 464–488, 627–648, 844–863, 902–927, 1005–1026, 1084–1190, and 1204–1254; these read SPPI…LDEP, SQPG…AGKG, HGAQ…QPLL, PTAT…LLQG, FSTE…VAGK, GACP…AGLK, and MKSK…PKAQ. Over residues 465–478 the composition is skewed to pro residues; that stretch reads PPIPLPEAAPPPSS. Acidic residues predominate over residues 1107 to 1117; it reads METDSEQDMED.

This sequence belongs to the SPATA31 family.

It is found in the membrane. In Mus musculus (Mouse), this protein is Spermatogenesis-associated protein 31F1B.